The following is a 406-amino-acid chain: Argininosuccinate synthase (406 aa).

Residues 10–18 (AYSGGLDTS) and Ala37 each bind ATP. L-citrulline contacts are provided by Tyr88 and Ser93. Residue Gly118 participates in ATP binding. Residues Thr120, Asn124, and Asp125 each contribute to the L-aspartate site. Asn124 is an L-citrulline binding site. L-citrulline contacts are provided by Arg128, Ser179, Ser188, Glu264, and Tyr276.

This sequence belongs to the argininosuccinate synthase family. Type 1 subfamily. As to quaternary structure, homotetramer.

The protein localises to the cytoplasm. The enzyme catalyses L-citrulline + L-aspartate + ATP = 2-(N(omega)-L-arginino)succinate + AMP + diphosphate + H(+). The protein operates within amino-acid biosynthesis; L-arginine biosynthesis; L-arginine from L-ornithine and carbamoyl phosphate: step 2/3. This chain is Argininosuccinate synthase, found in Roseobacter denitrificans (strain ATCC 33942 / OCh 114) (Erythrobacter sp. (strain OCh 114)).